A 339-amino-acid chain; its full sequence is Holliday junction branch migration complex subunit RuvB (339 aa).

The segment at 1–187 (MQGFEDENRI…FGVICKLDYY (187 aa)) is large ATPase domain (RuvB-L). Residues L26, R27, G68, K71, T72, T73, 134–136 (EDF), R177, Y187, and R224 contribute to the ATP site. T72 serves as a coordination point for Mg(2+). Residues 188–258 (TVDELSKIVL…VAKDALELLG (71 aa)) are small ATPAse domain (RuvB-S). Residues 261–339 (SLGLDFVDEK…HLKIPYPNEK (79 aa)) are head domain (RuvB-H). R297, R316, and R321 together coordinate DNA.

It belongs to the RuvB family. In terms of assembly, homohexamer. Forms an RuvA(8)-RuvB(12)-Holliday junction (HJ) complex. HJ DNA is sandwiched between 2 RuvA tetramers; dsDNA enters through RuvA and exits via RuvB. An RuvB hexamer assembles on each DNA strand where it exits the tetramer. Each RuvB hexamer is contacted by two RuvA subunits (via domain III) on 2 adjacent RuvB subunits; this complex drives branch migration. In the full resolvosome a probable DNA-RuvA(4)-RuvB(12)-RuvC(2) complex forms which resolves the HJ.

The protein localises to the cytoplasm. The enzyme catalyses ATP + H2O = ADP + phosphate + H(+). Functionally, the RuvA-RuvB-RuvC complex processes Holliday junction (HJ) DNA during genetic recombination and DNA repair, while the RuvA-RuvB complex plays an important role in the rescue of blocked DNA replication forks via replication fork reversal (RFR). RuvA specifically binds to HJ cruciform DNA, conferring on it an open structure. The RuvB hexamer acts as an ATP-dependent pump, pulling dsDNA into and through the RuvAB complex. RuvB forms 2 homohexamers on either side of HJ DNA bound by 1 or 2 RuvA tetramers; 4 subunits per hexamer contact DNA at a time. Coordinated motions by a converter formed by DNA-disengaged RuvB subunits stimulates ATP hydrolysis and nucleotide exchange. Immobilization of the converter enables RuvB to convert the ATP-contained energy into a lever motion, pulling 2 nucleotides of DNA out of the RuvA tetramer per ATP hydrolyzed, thus driving DNA branch migration. The RuvB motors rotate together with the DNA substrate, which together with the progressing nucleotide cycle form the mechanistic basis for DNA recombination by continuous HJ branch migration. Branch migration allows RuvC to scan DNA until it finds its consensus sequence, where it cleaves and resolves cruciform DNA. This chain is Holliday junction branch migration complex subunit RuvB, found in Clostridioides difficile (strain 630) (Peptoclostridium difficile).